Here is a 118-residue protein sequence, read N- to C-terminus: Probable mitochondrial pyruvate carrier 2 (118 aa).

A run of 3 helical transmembrane segments spans residues 19-35 (VHFWAPAMKWTLVLSGI), 50-66 (YAALCATGAIWTRWSLI), and 72-94 (YFNATVNFFLAIVGAVQVSRILV).

Belongs to the mitochondrial pyruvate carrier (MPC) (TC 2.A.105) family. As to quaternary structure, the functional 150 kDa pyruvate import complex is a heteromer of mpc1 and mpc2.

The protein resides in the mitochondrion inner membrane. In terms of biological role, mediates the uptake of pyruvate into mitochondria. The sequence is that of Probable mitochondrial pyruvate carrier 2 from Schizosaccharomyces pombe (strain 972 / ATCC 24843) (Fission yeast).